The sequence spans 81 residues: Small ribosomal subunit protein bS18 (81 aa).

The protein belongs to the bacterial ribosomal protein bS18 family. In terms of assembly, part of the 30S ribosomal subunit. Forms a tight heterodimer with protein bS6.

In terms of biological role, binds as a heterodimer with protein bS6 to the central domain of the 16S rRNA, where it helps stabilize the platform of the 30S subunit. This chain is Small ribosomal subunit protein bS18, found in Chloroflexus aurantiacus (strain ATCC 29366 / DSM 635 / J-10-fl).